Reading from the N-terminus, the 413-residue chain is MAINKVSSKPVCRDGVKKVVVAYSGGLDTSIILSWVKENYGCEVVACCVDVGQGKELEGLDEKAKKTGASKSYIIDAKKEFVTNYIYPTIKVNALYENKYYLGTSLARPIIAEKIADVVKKEKADAVCHGATGKGNDQVRFELAFKSLMPNVKIIAPWREWDIKSREDAIDYAKKRDISVPVTKAKPYSSDANLWHISYEGGVLEDLENEYDESMFKMTVSPEKAPDKPMYLAIAFEQGIPVSIDGNKFTPVELITKLNEIAGANSIGRADIVENRLVGMKSRGVYESPAAAVLYAAHEELESISIDRDTLHFKQLLAHKYAEIAYYGLWFSPLREALDAFINETQKYVTGSIKLKLYKGNIIIVARQAKYSLYSEKLATFEKDEIYNHKDAEGFINLWGLPTKMQAMLRKSE.

22-30 (AYSGGLDTS) contacts ATP. Positions 100 and 105 each coordinate L-citrulline. Gly130 serves as a coordination point for ATP. Positions 132, 136, and 137 each coordinate L-aspartate. Asn136 serves as a coordination point for L-citrulline. The L-citrulline site is built by Arg140, Ser189, Ser198, Glu274, and Tyr286.

This sequence belongs to the argininosuccinate synthase family. Type 1 subfamily. In terms of assembly, homotetramer.

It localises to the cytoplasm. It catalyses the reaction L-citrulline + L-aspartate + ATP = 2-(N(omega)-L-arginino)succinate + AMP + diphosphate + H(+). It participates in amino-acid biosynthesis; L-arginine biosynthesis; L-arginine from L-ornithine and carbamoyl phosphate: step 2/3. The chain is Argininosuccinate synthase from Endomicrobium trichonymphae.